We begin with the raw amino-acid sequence, 127 residues long: Small ribosomal subunit protein uS11 (127 aa).

This sequence belongs to the universal ribosomal protein uS11 family. In terms of assembly, part of the 30S ribosomal subunit. Interacts with proteins S7 and S18. Binds to IF-3.

Its function is as follows. Located on the platform of the 30S subunit, it bridges several disparate RNA helices of the 16S rRNA. Forms part of the Shine-Dalgarno cleft in the 70S ribosome. The chain is Small ribosomal subunit protein uS11 from Rickettsia bellii (strain RML369-C).